The following is a 164-amino-acid chain: Small ribosomal subunit protein uS5 (164 aa).

The S5 DRBM domain maps to 10–73 (LEERVVAINR…EDAKKNLIEV (64 aa)).

Belongs to the universal ribosomal protein uS5 family. Part of the 30S ribosomal subunit. Contacts proteins S4 and S8.

Functionally, with S4 and S12 plays an important role in translational accuracy. Its function is as follows. Located at the back of the 30S subunit body where it stabilizes the conformation of the head with respect to the body. The protein is Small ribosomal subunit protein uS5 of Streptococcus gordonii (strain Challis / ATCC 35105 / BCRC 15272 / CH1 / DL1 / V288).